The sequence spans 218 residues: Uridine kinase (218 aa).

16 to 23 (GGSGSGKT) serves as a coordination point for ATP.

The protein belongs to the uridine kinase family.

The protein resides in the cytoplasm. It carries out the reaction uridine + ATP = UMP + ADP + H(+). The enzyme catalyses cytidine + ATP = CMP + ADP + H(+). The protein operates within pyrimidine metabolism; CTP biosynthesis via salvage pathway; CTP from cytidine: step 1/3. It participates in pyrimidine metabolism; UMP biosynthesis via salvage pathway; UMP from uridine: step 1/1. The chain is Uridine kinase from Limosilactobacillus reuteri (strain DSM 20016) (Lactobacillus reuteri).